The sequence spans 170 residues: Cytochrome c-type biogenesis protein CcmE (170 aa).

At 1-7 (MTRKKRR) the chain is on the cytoplasmic side. Residues 8 to 28 (LILIAACGSVLALAVGLILYA) form a helical; Signal-anchor for type II membrane protein membrane-spanning segment. Residues 29 to 170 (MSGSIVFFRS…DSTLGPRSER (142 aa)) lie on the Periplasmic side of the membrane. Heme-binding residues include histidine 122 and tyrosine 126. Residues 132–170 (ADALKAQGRWQEGGPNRGGPAPKPATAAADSTLGPRSER) are disordered.

This sequence belongs to the CcmE/CycJ family.

It localises to the cell inner membrane. Functionally, heme chaperone required for the biogenesis of c-type cytochromes. Transiently binds heme delivered by CcmC and transfers the heme to apo-cytochromes in a process facilitated by CcmF and CcmH. This chain is Cytochrome c-type biogenesis protein CcmE, found in Methylobacterium radiotolerans (strain ATCC 27329 / DSM 1819 / JCM 2831 / NBRC 15690 / NCIMB 10815 / 0-1).